We begin with the raw amino-acid sequence, 130 residues long: Large-conductance mechanosensitive channel (130 aa).

A run of 2 helical transmembrane segments spans residues 14–34 (IIDL…VTSF) and 73–93 (FVDF…LVKF).

Belongs to the MscL family. In terms of assembly, homopentamer.

It localises to the cell membrane. Its function is as follows. Channel that opens in response to stretch forces in the membrane lipid bilayer. May participate in the regulation of osmotic pressure changes within the cell. The sequence is that of Large-conductance mechanosensitive channel from Oceanobacillus iheyensis (strain DSM 14371 / CIP 107618 / JCM 11309 / KCTC 3954 / HTE831).